Consider the following 364-residue polypeptide: Methylthioribose-1-phosphate isomerase (364 aa).

Aspartate 246 serves as the catalytic Proton donor.

This sequence belongs to the eIF-2B alpha/beta/delta subunits family. MtnA subfamily.

The protein resides in the cytoplasm. It localises to the nucleus. The enzyme catalyses 5-(methylsulfanyl)-alpha-D-ribose 1-phosphate = 5-(methylsulfanyl)-D-ribulose 1-phosphate. The protein operates within amino-acid biosynthesis; L-methionine biosynthesis via salvage pathway; L-methionine from S-methyl-5-thio-alpha-D-ribose 1-phosphate: step 1/6. Its function is as follows. Catalyzes the interconversion of methylthioribose-1-phosphate (MTR-1-P) into methylthioribulose-1-phosphate (MTRu-1-P). In Bombyx mori (Silk moth), this protein is Methylthioribose-1-phosphate isomerase.